The following is a 283-amino-acid chain: Elongation factor Ts (283 aa).

Residues 80–83 (TDFV) form an involved in Mg(2+) ion dislocation from EF-Tu region.

Belongs to the EF-Ts family.

Its subcellular location is the cytoplasm. Associates with the EF-Tu.GDP complex and induces the exchange of GDP to GTP. It remains bound to the aminoacyl-tRNA.EF-Tu.GTP complex up to the GTP hydrolysis stage on the ribosome. This chain is Elongation factor Ts, found in Citrobacter koseri (strain ATCC BAA-895 / CDC 4225-83 / SGSC4696).